A 67-amino-acid polypeptide reads, in one-letter code: Large ribosomal subunit protein bL35 (67 aa).

Belongs to the bacterial ribosomal protein bL35 family.

The polypeptide is Large ribosomal subunit protein bL35 (Bartonella tribocorum (strain CIP 105476 / IBS 506)).